The following is a 106-amino-acid chain: UPF0145 protein Athe_0545 (106 aa).

Belongs to the UPF0145 family.

This Caldicellulosiruptor bescii (strain ATCC BAA-1888 / DSM 6725 / KCTC 15123 / Z-1320) (Anaerocellum thermophilum) protein is UPF0145 protein Athe_0545.